The chain runs to 419 residues: 4-hydroxyphenylpyruvate dioxygenase (419 aa).

VOC domains follow at residues 37–185 (GYDH…LLSR) and 216–376 (RIDH…LFTR). 3 residues coordinate Fe cation: histidine 219, histidine 302, and glutamate 387.

It belongs to the 4HPPD family. Fe cation serves as cofactor.

It carries out the reaction 3-(4-hydroxyphenyl)pyruvate + O2 = homogentisate + CO2. The protein operates within amino-acid degradation; L-phenylalanine degradation; acetoacetate and fumarate from L-phenylalanine: step 3/6. In Pyricularia oryzae (strain 70-15 / ATCC MYA-4617 / FGSC 8958) (Rice blast fungus), this protein is 4-hydroxyphenylpyruvate dioxygenase (HPD4).